Here is a 263-residue protein sequence, read N- to C-terminus: Chaperone protein ClpE (263 aa).

An N-terminal signal peptide occupies residues 1–34 (MSKRNAVTTFFTNRVTKALGMTLALMMTCQSAMA). Residues 238-255 (QKKTPTSSGQKASDSLVN) are compositionally biased toward polar residues. A disordered region spans residues 238 to 263 (QKKTPTSSGQKASDSLVNPSDKADKK).

Belongs to the periplasmic pilus chaperone family.

The protein resides in the periplasm. Functionally, involved in the biogenesis of the CS31A capsule-like antigen. In Escherichia coli, this protein is Chaperone protein ClpE (clpE).